We begin with the raw amino-acid sequence, 37 residues long: Large ribosomal subunit protein bL36 (37 aa).

It belongs to the bacterial ribosomal protein bL36 family.

In Prochlorococcus marinus (strain MIT 9303), this protein is Large ribosomal subunit protein bL36.